A 1072-amino-acid polypeptide reads, in one-letter code: DNA-directed RNA polymerase subunit beta (1072 aa).

It belongs to the RNA polymerase beta chain family. As to quaternary structure, in plastids the minimal PEP RNA polymerase catalytic core is composed of four subunits: alpha, beta, beta', and beta''. When a (nuclear-encoded) sigma factor is associated with the core the holoenzyme is formed, which can initiate transcription.

The protein localises to the plastid. Its subcellular location is the chloroplast. It carries out the reaction RNA(n) + a ribonucleoside 5'-triphosphate = RNA(n+1) + diphosphate. In terms of biological role, DNA-dependent RNA polymerase catalyzes the transcription of DNA into RNA using the four ribonucleoside triphosphates as substrates. The chain is DNA-directed RNA polymerase subunit beta from Eucalyptus globulus subsp. globulus (Tasmanian blue gum).